The chain runs to 392 residues: [Phe13]-bombesin receptor (392 aa).

The Extracellular segment spans residues 1 to 40; the sequence is MPEGFQSLNQTLPSAISSIAHLESLNDSFILGAKQSEDVS. N-linked (GlcNAc...) asparagine glycans are attached at residues N9 and N26. Residues 41-62 traverse the membrane as a helical segment; that stretch reads PGLEILALISVTYAVIISVGIL. Residues 63–81 are Cytoplasmic-facing; sequence GNTILIKVFFKIKSMQTVP. Residues 82 to 102 form a helical membrane-spanning segment; that stretch reads NIFITSLAFGDLLLLLTCVPV. The Extracellular portion of the chain corresponds to 103–120; sequence DASRYIVDTWMFGRAGCK. C119 and C202 are oxidised to a cystine. Residues 121-142 form a helical membrane-spanning segment; it reads IISFIQLTSVGVSVFTLTVLSA. The Cytoplasmic segment spans residues 143 to 162; the sequence is DRYRAIVKPLQLQTSDAVLK. The chain crosses the membrane as a helical span at residues 163–183; the sequence is TCGKAVCVWIISMLLAAPEAV. Residues 184 to 219 are Extracellular-facing; sequence FSDLYEFGSSEKNTTFEACAPYPVSEKILQETHSLI. A helical membrane pass occupies residues 220 to 240; sequence CFLVFYIVPLSIISAYYFLIA. At 241 to 271 the chain is on the cytoplasmic side; that stretch reads KTLYKSTFNMPAEEHTHARKQIESRKRVAKT. Residues 272–292 form a helical membrane-spanning segment; that stretch reads VLVLVALFAVCWLPNHMLYLY. Residues 293–312 are Extracellular-facing; sequence RSFTYHSAVNSSAFHLSATI. The chain crosses the membrane as a helical span at residues 313-332; that stretch reads FARVLAFSNSCVNPFALYWL. At 333–392 the chain is on the cytoplasmic side; that stretch reads SRSFRQHFKKQVYCCKTEPPASQQSPTHSSTITGITAVKGNIQMSEISITLLSAYDVKKE. C346 carries S-palmitoyl cysteine lipidation.

This sequence belongs to the G-protein coupled receptor 1 family. As to expression, expressed only in brain, primarily in cortex and forebrain and at low levels in the midbrain.

The protein resides in the cell membrane. Functionally, the relative rank potency of bombesin-like peptides for this receptor is [Phe13]bombesin &gt; [Leu13]bombesin &gt; GRP &gt; neuromedin-B. The protein is [Phe13]-bombesin receptor (BB4) of Bombina orientalis (Oriental fire-bellied toad).